Consider the following 137-residue polypeptide: Large ribosomal subunit protein uL16 (137 aa).

This sequence belongs to the universal ribosomal protein uL16 family. As to quaternary structure, part of the 50S ribosomal subunit.

Binds 23S rRNA and is also seen to make contacts with the A and possibly P site tRNAs. This Bartonella tribocorum (strain CIP 105476 / IBS 506) protein is Large ribosomal subunit protein uL16.